A 187-amino-acid polypeptide reads, in one-letter code: Adenylate kinase 1 (187 aa).

14–19 (GSGKGT) contacts ATP. The NMP stretch occupies residues 34-63 (STGDMLRQAIADGTELGNQAKGYMDKGELV). Residues T35, R40, 61–63 (ELV), 89–92 (GFPR), and Q96 contribute to the AMP site. Residues 130-136 (ARGRADD) are LID. ATP is bound at residue R131. Residues R133 and R144 each contribute to the AMP site. Q172 provides a ligand contact to ATP.

It belongs to the adenylate kinase family. In terms of assembly, monomer.

The protein resides in the cytoplasm. The catalysed reaction is AMP + ATP = 2 ADP. It participates in purine metabolism; AMP biosynthesis via salvage pathway; AMP from ADP: step 1/1. Functionally, catalyzes the reversible transfer of the terminal phosphate group between ATP and AMP. Plays an important role in cellular energy homeostasis and in adenine nucleotide metabolism. This is Adenylate kinase 1 from Synechocystis sp. (strain ATCC 27184 / PCC 6803 / Kazusa).